A 561-amino-acid chain; its full sequence is uncharacterized protein (561 aa).

Disordered stretches follow at residues 20–42 and 82–283; these read IQEQATSDTKPESSPDINLGCSP and QIGS…STPF. Basic and acidic residues predominate over residues 103 to 131; the sequence is DKISEDTDQERVVVCESLENKSSSKDKSP. Basic residues-rich tracts occupy residues 135 to 156 and 165 to 185; these read RSPKRHKSSKKHKSSKKHKSSK and KSSKRHKSHKKKDKSHKKRYR. 3 stretches are compositionally biased toward basic and acidic residues: residues 192–203, 211–247, and 259–272; these read SLSRDRSSSRDR, YSRDRSLSRDRSLSRDRSLSRDRSPPRDRSLSRDRSP, and PLRDRSPTRDRSVS.

The protein belongs to the mimivirus L41 family.

This is an uncharacterized protein from Acanthamoeba polyphaga (Amoeba).